The sequence spans 182 residues: Envelope glycoprotein L (182 aa).

The first 39 residues, Met-1–Ala-39, serve as a signal peptide directing secretion. Residues Ala-52–Val-182 enclose the gL alphaherpesvirus-type domain. A disulfide bridge connects residues Cys-73 and Cys-109.

It belongs to the herpesviridae glycoprotein L (gL) family. Alphaherpesvirinae gL subfamily. Interacts with glycoprotein H (gH); this interaction is necessary for the correct processing and cell surface expression of gH. The heterodimer gH/gL seems to interact with gB trimers during fusion. In terms of processing, O-glycosylated, and sialylated.

It is found in the virion membrane. The protein resides in the host cell membrane. It localises to the host Golgi apparatus. The protein localises to the host trans-Golgi network. Functionally, the heterodimer glycoprotein H-glycoprotein L is required for the fusion of viral and plasma membranes leading to virus entry into the host cell. Acts as a functional inhibitor of gH and maintains gH in an inhibited form. Upon binding to host integrins, gL dissociates from gH leading to activation of the viral fusion glycoproteins gB and gH. The polypeptide is Envelope glycoprotein L (Amazona oratrix (yellow-headed parrot)).